Reading from the N-terminus, the 364-residue chain is Probable transcription factor At4g00390 (364 aa).

The tract at residues 1–149 (MTKKLDPPTA…STKRVKKDEE (149 aa)) is disordered. The span at 13-32 (SDEDDVETSEDDSSSSEEDE) shows a compositional bias: acidic residues. Over residues 39–80 (ATTAAAPAKSTAVSAATPAKSTSVSAAAPSKSTAVSAAADSD) the composition is skewed to low complexity. Residues 81 to 93 (SGSESETDSDSES) are compositionally biased toward acidic residues.

Belongs to the GeBP family.

This Arabidopsis thaliana (Mouse-ear cress) protein is Probable transcription factor At4g00390.